We begin with the raw amino-acid sequence, 554 residues long: Cytochrome c oxidase subunit 1-alpha (554 aa).

The helical transmembrane segment at K26–H56 threads the bilayer. C63 and C77 are oxidised to a cystine. The next 6 helical transmembrane spans lie at A81–G118, L127–S148, A175–N203, P215–F248, D260–A295, and G301–V319. H91 serves as a coordination point for Fe(II)-heme a. H273 and Y277 together coordinate Cu cation. The 1'-histidyl-3'-tyrosine (His-Tyr) cross-link spans H273–Y277. 2 residues coordinate Cu cation: H322 and H323. Transmembrane regions (helical) follow at residues L331–M359, K367–Q390, D399–Y425, P436–R463, and S478–A508. Residue H406 coordinates heme a3. H408 serves as a coordination point for Fe(II)-heme a.

This sequence belongs to the heme-copper respiratory oxidase family. The cofactor is Cu(2+). Requires heme as cofactor.

It localises to the cell inner membrane. It carries out the reaction 4 Fe(II)-[cytochrome c] + O2 + 8 H(+)(in) = 4 Fe(III)-[cytochrome c] + 2 H2O + 4 H(+)(out). It participates in energy metabolism; oxidative phosphorylation. Its function is as follows. Subunit I and II form the functional core of the enzyme complex. Electrons originating in cytochrome c are transferred via heme a and Cu(A) to the binuclear center formed by heme a3 and Cu(B). This cytochrome c oxidase shows proton pump activity across the membrane in addition to the electron transfer. The protein is Cytochrome c oxidase subunit 1-alpha (ctaDI) of Paracoccus denitrificans.